Reading from the N-terminus, the 498-residue chain is ATP synthase subunit beta, chloroplastic (498 aa).

ATP is bound at residue 172 to 179 (GGAGVGKT).

This sequence belongs to the ATPase alpha/beta chains family. In terms of assembly, F-type ATPases have 2 components, CF(1) - the catalytic core - and CF(0) - the membrane proton channel. CF(1) has five subunits: alpha(3), beta(3), gamma(1), delta(1), epsilon(1). CF(0) has four main subunits: a(1), b(1), b'(1) and c(9-12).

The protein localises to the plastid. It is found in the chloroplast thylakoid membrane. It catalyses the reaction ATP + H2O + 4 H(+)(in) = ADP + phosphate + 5 H(+)(out). Produces ATP from ADP in the presence of a proton gradient across the membrane. The catalytic sites are hosted primarily by the beta subunits. This chain is ATP synthase subunit beta, chloroplastic, found in Platanus occidentalis (Sycamore).